Consider the following 37-residue polypeptide: Large ribosomal subunit protein bL36 (37 aa).

This sequence belongs to the bacterial ribosomal protein bL36 family.

This Psychromonas ingrahamii (strain DSM 17664 / CCUG 51855 / 37) protein is Large ribosomal subunit protein bL36.